The following is a 211-amino-acid chain: EAINQGMDEELERDEKVFLLGEEVAQYDGAYKVSRTYYMSAGLQPVPIVFRGPNGASAGVAAQHSQCFAAWYGHCPGLKVVSPWNSEDAKGLIKSAIRDDNPVVMLENELMYGVAFELPTEAQSKDFLIPIGKEGIECEVINLRTIRPMDIEAIEASVMKTNHLVTVEGGWPQFGVGAEICARIMEGPAFNFLDAPAVRVTGADVPMPYAK.

Tyr-31 carries the phosphotyrosine modification. Residues Ile-48, Ala-96, Ile-97, Asp-99, and Asn-101 each coordinate K(+).

As to quaternary structure, heterotetramer of two PDHA1 and two PDHB subunits. The heterotetramer interacts with DLAT, and is part of the multimeric pyruvate dehydrogenase complex that contains multiple copies of pyruvate dehydrogenase (E1), dihydrolipoamide acetyltransferase (DLAT, E2) and lipoamide dehydrogenase (DLD, E3). These subunits are bound to an inner core composed of about 48 DLAT and 12 PDHX molecules. Interacts with DLAT. It depends on thiamine diphosphate as a cofactor.

It is found in the mitochondrion matrix. It carries out the reaction N(6)-[(R)-lipoyl]-L-lysyl-[protein] + pyruvate + H(+) = N(6)-[(R)-S(8)-acetyldihydrolipoyl]-L-lysyl-[protein] + CO2. Its function is as follows. The pyruvate dehydrogenase complex catalyzes the overall conversion of pyruvate to acetyl-CoA and CO(2), and thereby links the glycolytic pathway to the tricarboxylic cycle. The chain is Pyruvate dehydrogenase E1 component subunit beta, mitochondrial from Mesocricetus auratus (Golden hamster).